The chain runs to 695 residues: RING finger protein 145 (695 aa).

13 helical membrane-spanning segments follow: residues 53-73, 77-97, 123-143, 146-166, 168-188, 225-245, 275-295, 316-336, 340-360, 384-404, 410-430, 460-480, and 482-502; these read YLAL…LTLP, LAKL…HQIS, FITA…VMKT, IWLF…VPIE, IVVI…YFLA, LVVP…QIYT, YSLL…LTLC, TEGV…LQVV, FLLS…MLEI, SLCL…CQFF, LLII…TLFI, LLEF…TVFG, and WTVM…WLRA. The segment at 537 to 575 adopts an RING-type; atypical zinc-finger fold; it reads CSICYQDMNSAVITPCSHFFHPGCLKKWLYVQETCPLCH. A compositionally biased stretch (polar residues) spans 585-603; sequence ATGESGSSTNPVSEQSATN. The tract at residues 585–610 is disordered; it reads ATGESGSSTNPVSEQSATNPPLGPVS.

It localises to the membrane. The protein is RING finger protein 145 (rnf145) of Xenopus tropicalis (Western clawed frog).